A 912-amino-acid chain; its full sequence is Protein SLFN14 (912 aa).

The segment at 206 to 391 (ESTHVEFKRF…KVHKFKEALQ (186 aa)) is required for endoribonuclease activity. Residues 392-571 (RHLFPVTQEE…QMGCEFFNLL (180 aa)) form a required for ribosome binding region. 593–600 (CFPGVRKT) lines the ATP pocket.

Belongs to the Schlafen family. Subgroup III subfamily. As to quaternary structure, associates with ribosomes in an ATP-independent manner. It depends on Mg(2+) as a cofactor. Mn(2+) is required as a cofactor. As to expression, expressed in megakaryocytes and platelets (at protein level). Weakly expressed in melanocytes and malignant melanoma cells.

Its subcellular location is the nucleus. In terms of biological role, shows no ribosome-associated and endoribonuclease activities. Displays polysome-associated endoribonuclease activity towards mRNAs and rRNAs. May play a role in RNA surveillance pathways by recognizing stalled ribosomes and triggering endonucleolytic cleavage of aberrant mRNAs. Cleaves different types of rRNAs and mRNAs in a magnesium- and manganese-dependent and ATP-independent manner. Involved in correct maturation of megakaryocytes and especially important for proplatelet extension. This is Protein SLFN14 from Homo sapiens (Human).